A 244-amino-acid chain; its full sequence is uncharacterized protein (244 aa).

An N-terminal signal peptide occupies residues 1 to 18 (MQFSVLCKFLLLVTAVMA). Residues 19–223 (QTEYTPGFTT…TTIPSSAVHY (205 aa)) lie on the Lumenal side of the membrane. Composition is skewed to low complexity over residues 55–65 (ETSTHSVTSTN) and 75–128 (TSHN…TTHV). The disordered stretch occupies residues 55-128 (ETSTHSVTST…TTVVPPTTHV (74 aa)). Residues 224–244 (ASPSGLLALVVMLISAFAFLA) traverse the membrane as a helical segment.

Its subcellular location is the endoplasmic reticulum membrane. This is an uncharacterized protein from Schizosaccharomyces pombe (strain 972 / ATCC 24843) (Fission yeast).